The sequence spans 207 residues: Ras-related protein Rab-8A (207 aa).

Positions 17, 18, 19, 20, 21, 22, 23, 35, 39, and 40 each coordinate GTP. A Mg(2+)-binding site is contributed by T22. 2 consecutive short sequence motifs (switch) follow at residues 31–45 (DAFNSTFISTIGIDF) and 63–80 (DTAGQERFRTITTAYYRG). Positions 40 and 63 each coordinate Mg(2+). G66 contacts GTP. Phosphothreonine is present on T72. GTP is bound by residues N121, K122, D124, A152, and K153. Residues S181 and S185 each carry the phosphoserine modification. Residue C204 is modified to Cysteine methyl ester. C204 carries S-geranylgeranyl cysteine lipidation. The propeptide at 205–207 (VLL) is removed in mature form.

This sequence belongs to the small GTPase superfamily. Rab family. In terms of assembly, interacts (GTP-bound form) with MICALL1; regulates RAB8A association with recycling endosomes. Interacts with MICALL2; competes with RAB13 and is involved in E-cadherin endocytic recycling. Interacts (GTP-bound form) with MICAL1, MICALCL, MICAL3, EHBP1 and EHBP1L1; at least in case of MICAL1, MICALCL, MICAL3 and EHBP1L1 two molecules of RAB8A can bind to one molecule of the effector protein; ternary complexes of RAB8A, RAB13 and either MICAL1 or EHBP1L1 are possible. Interacts with EHD1. Interacts with MAP4K2 and SYTL4. Interacts with SGSM1 and SGSM3. Interacts with RABIF, RIMS2, RPH3A and RPH3A. Interacts with OPTN. Interacts with RAB3IP, RAB3IP functions as guanine exchange factor (GEF). Interacts with MYO5B. Interacts with CIMAP3. Interacts with BIRC6/bruce. Interacts with OCRL. Interacts with AHI1. Interacts with DCDC1. Interacts with LRRK2; interaction facilitates phosphorylation of Thr-72. Interacts with RAB31P, GDI1, GDI2, CHM, CHML, RABGGTA, RABGGTB, TBC1D15 and INPP5B; these interactions are dependent on Thr-72 not being phosphorylated. Interacts with RILPL1 and RILPL2; these interactions are dependent on the phosphorylation of Thr-72 by LRRK2. Interacts with DZIP1; prevents inhibition by the GDP-dissociation inhibitor GDI2. Interacts (in GDP-bound form) with RAB3IP/Rabin8, RAB3IP functions as guanine exchange factor (GEF) towards RAB8A. Interacts (in GDP-bound form) with RPGR, RPGR functions as GEF towards RAB8A. Mg(2+) is required as a cofactor. In terms of processing, phosphorylation of Thr-72 in the switch II region by LRRK2 prevents the association of RAB regulatory proteins, including CHM, CHML and RAB GDP dissociation inhibitors GDI1 and GDI2. Phosphorylation by LRRK2 is required for localization to stressed lysosomes.

Its subcellular location is the cell membrane. It is found in the golgi apparatus. It localises to the endosome membrane. The protein resides in the recycling endosome membrane. The protein localises to the cell projection. Its subcellular location is the cilium. It is found in the cytoplasmic vesicle. It localises to the phagosome membrane. The protein resides in the cytoplasm. The protein localises to the cytoskeleton. Its subcellular location is the microtubule organizing center. It is found in the centrosome. It localises to the centriole. The protein resides in the cilium basal body. The protein localises to the midbody. Its subcellular location is the lysosome. The enzyme catalyses GTP + H2O = GDP + phosphate + H(+). Its activity is regulated as follows. Regulated by guanine nucleotide exchange factors (GEFs) such as RAB3IP/Rabin8 and RPGR which promote the exchange of bound GDP for free GTP, GTPase activating proteins (GAPs) which increase the GTP hydrolysis activity, and GDP dissociation inhibitors (GDIs) which inhibit the dissociation of the nucleotide from the GTPase. Activated in response to insulin. In terms of biological role, the small GTPases Rab are key regulators of intracellular membrane trafficking, from the formation of transport vesicles to their fusion with membranes. Rabs cycle between an inactive GDP-bound form and an active GTP-bound form that is able to recruit to membranes different sets of downstream effectors directly responsible for vesicle formation, movement, tethering and fusion. RAB8A is involved in polarized vesicular trafficking and neurotransmitter release. Together with RAB11A, RAB3IP, the exocyst complex, PARD3, PRKCI, ANXA2, CDC42 and DNMBP promotes transcytosis of PODXL to the apical membrane initiation sites (AMIS), apical surface formation and lumenogenesis. Regulates the compacted morphology of the Golgi. Together with MYO5B and RAB11A participates in epithelial cell polarization. Also involved in membrane trafficking to the cilium and ciliogenesis. Together with MICALL2, may also regulate adherens junction assembly. May play a role in insulin-induced transport to the plasma membrane of the glucose transporter GLUT4 and therefore play a role in glucose homeostasis. Involved in autophagy. Participates in the export of a subset of neosynthesized proteins through a Rab8-Rab10-Rab11-dependent endososomal export route. Targeted to and stabilized on stressed lysosomes through LRRK2 phosphorylation. Suppresses stress-induced lysosomal enlargement through EHBP1 and EHNP1L1 effector proteins. The polypeptide is Ras-related protein Rab-8A (RAB8A) (Pongo abelii (Sumatran orangutan)).